A 447-amino-acid polypeptide reads, in one-letter code: Protein chibby homolog 2 (447 aa).

8 positions are modified to phosphoserine: serine 41, serine 85, serine 88, serine 96, serine 123, serine 143, serine 147, and serine 149. Positions 164–197 form a coiled coil; the sequence is EYLLQEENKSLRDENRALRDENKALRKENKILQV. 2 disordered regions span residues 208–244 and 266–320; these read HEES…KENT and WAQA…EDSK. Phosphoserine is present on residues serine 211 and serine 224. Residues 218–232 are compositionally biased toward basic and acidic residues; the sequence is LHKDTTSQEVVKKDN. Residues 237-264 adopt a coiled-coil conformation; sequence AQRSKENTLQFIREENRALQQLLEQRQA. Positions 266–276 are enriched in low complexity; it reads WAQAEESATSA. Phosphoserine is present on residues serine 272 and serine 275. Residues 277-290 are compositionally biased toward basic and acidic residues; sequence EEGKPTSSPKEEPH. 2 positions are modified to phosphoserine: serine 333 and serine 336. A coiled-coil region spans residues 354–412; it reads LQLLREMNQALQALREENRLLQEENRALHAMREEHRVFQEENKALWENNKLKLQQRLVI.

Belongs to the chibby family. SPERT subfamily. As to quaternary structure, homodimer. Binds to NEK1.

This Rattus norvegicus (Rat) protein is Protein chibby homolog 2 (Cby2).